A 731-amino-acid polypeptide reads, in one-letter code: Penicillin-binding protein 2a (731 aa).

Over 1–56 (MKLDKLFEKFLSLFKKETSELEDSDSTILRRSRSDRKKLAQVGPIRKFWRRYHLTK) the chain is Cytoplasmic. The helical; Signal-anchor for type II membrane protein transmembrane segment at 57–77 (IILILGLSAGLLVGIYLFAVA) threads the bilayer. Residues 78–156 (KSTNVNDLQN…FLAIVTAGRS (79 aa)) form a hydrophobic; associated with cytoplasmic membrane. Required for transglycosylase activity, but not for lipid II binding region. The interval 78 to 300 (KSTNVNDLQN…SQLHDKYEGK (223 aa)) is transglycosylase. The Extracellular segment spans residues 78-731 (KSTNVNDLQN…IWDSIVNLFR (654 aa)). Catalysis depends on Glu131, which acts as the Proton donor; for transglycosylase activity. Residues 301 to 731 (ISDYRYPSYF…IWDSIVNLFR (431 aa)) form a transpeptidase region. The active-site Acyl-ester intermediate; for transpeptidase activity is the Ser410. Residues 674–694 (ANTKRQVQTNDNSQTDDNLSD) form a disordered region. Polar residues predominate over residues 676–690 (TKRQVQTNDNSQTDD).

The protein in the N-terminal section; belongs to the glycosyltransferase 51 family. This sequence in the C-terminal section; belongs to the transpeptidase family. As to quaternary structure, homodimer. May also form higher order oligomers. Self-association may depend on its transmembrane and/or cytoplasmic regions. Interacts with MacP; interaction is required for the function of this protein.

Its subcellular location is the cell membrane. The protein localises to the secreted. It is found in the cell wall. It catalyses the reaction Preferential cleavage: (Ac)2-L-Lys-D-Ala-|-D-Ala. Also transpeptidation of peptidyl-alanyl moieties that are N-acyl substituents of D-alanine.. The enzyme catalyses [GlcNAc-(1-&gt;4)-Mur2Ac(oyl-L-Ala-gamma-D-Glu-L-Lys-D-Ala-D-Ala)](n)-di-trans,octa-cis-undecaprenyl diphosphate + beta-D-GlcNAc-(1-&gt;4)-Mur2Ac(oyl-L-Ala-gamma-D-Glu-L-Lys-D-Ala-D-Ala)-di-trans,octa-cis-undecaprenyl diphosphate = [GlcNAc-(1-&gt;4)-Mur2Ac(oyl-L-Ala-gamma-D-Glu-L-Lys-D-Ala-D-Ala)](n+1)-di-trans,octa-cis-undecaprenyl diphosphate + di-trans,octa-cis-undecaprenyl diphosphate + H(+). The protein operates within cell wall biogenesis; peptidoglycan biosynthesis. In terms of biological role, cell wall formation. Synthesis of cross-linked peptidoglycan (PG) from the lipid intermediates. Binds dansylated lipid II and catalyzes the polymerization of glycan chains. Hydrolyzes S2d (N-benzoyl-D-alanylmercaptoacetic acid) molecule, a synthetic thiolester analog of cell wall stem peptide. Active against bocillin, a fluorescent penicillin. No transpeptidase activity with non-fluorescent lysine-containing lipid II as substrate. The sequence is that of Penicillin-binding protein 2a from Streptococcus pneumoniae serotype 2 (strain D39 / NCTC 7466).